The sequence spans 486 residues: N-succinylglutamate 5-semialdehyde dehydrogenase (486 aa).

Residue 220-225 coordinates NAD(+); that stretch reads GSSRTG. Active-site residues include Glu243 and Cys277.

It belongs to the aldehyde dehydrogenase family. AstD subfamily.

It carries out the reaction N-succinyl-L-glutamate 5-semialdehyde + NAD(+) + H2O = N-succinyl-L-glutamate + NADH + 2 H(+). It functions in the pathway amino-acid degradation; L-arginine degradation via AST pathway; L-glutamate and succinate from L-arginine: step 4/5. In terms of biological role, catalyzes the NAD-dependent reduction of succinylglutamate semialdehyde into succinylglutamate. This is N-succinylglutamate 5-semialdehyde dehydrogenase from Shewanella baltica (strain OS185).